The following is a 420-amino-acid chain: Serine/threonine-protein phosphatase 4 regulatory subunit 2-A (420 aa).

Positions 157 to 420 (GNTSAFPDRN…ETADDNMEQD (264 aa)) are disordered. A compositionally biased stretch (polar residues) spans 182 to 195 (SLSSNVATNGLPDS). Over residues 196-210 (TESKEQASEQSERTV) the composition is skewed to basic and acidic residues. The span at 212 to 224 (ESSASEAESHSGA) shows a compositional bias: low complexity. The span at 229–250 (HRDDEDATHAETHEAKRLKFDK) shows a compositional bias: basic and acidic residues. Acidic residues predominate over residues 251-266 (EEEEEEDDEEEDEDGD). Residues 267 to 276 (EIKKELDEPH) are compositionally biased toward basic and acidic residues. Residues 278–296 (PCTSVAESSSDVPQSSTDV) are compositionally biased toward polar residues. Residues 318–332 (GVDRSTSEDSPDPSH) show a composition bias toward basic and acidic residues. Residues 346–364 (AEEEEEEESAEAQETEETN) show a composition bias toward acidic residues. The span at 368-394 (SSSSNNSSDEGVSSAETPSASPSSSTE) shows a compositional bias: low complexity. Residues 411-420 (ETADDNMEQD) are compositionally biased toward acidic residues.

It belongs to the PPP4R2 family. In terms of assembly, serine/threonine-protein phosphatase 4 (PP4) occurs in different assemblies of the catalytic and one or more regulatory subunits.

Functionally, regulatory subunit of serine/threonine-protein phosphatase 4 (PP4C). The chain is Serine/threonine-protein phosphatase 4 regulatory subunit 2-A (ppp4r2a) from Danio rerio (Zebrafish).